The sequence spans 363 residues: NAD(P)H-quinone oxidoreductase subunit 1, chloroplastic (363 aa).

The next 6 membrane-spanning stretches (helical) occupy residues 30–50 (LIPI…IVWL), 104–124 (IAVI…HLVL), 127–147 (LSIG…GLLM), 248–268 (YSGI…LVSS), 300–320 (VFGT…FLFI), and 343–363 (FLLP…LISL).

This sequence belongs to the complex I subunit 1 family. In terms of assembly, NDH is composed of at least 16 different subunits, 5 of which are encoded in the nucleus.

The protein localises to the plastid. It is found in the chloroplast thylakoid membrane. The catalysed reaction is a plastoquinone + NADH + (n+1) H(+)(in) = a plastoquinol + NAD(+) + n H(+)(out). It carries out the reaction a plastoquinone + NADPH + (n+1) H(+)(in) = a plastoquinol + NADP(+) + n H(+)(out). In terms of biological role, NDH shuttles electrons from NAD(P)H:plastoquinone, via FMN and iron-sulfur (Fe-S) centers, to quinones in the photosynthetic chain and possibly in a chloroplast respiratory chain. The immediate electron acceptor for the enzyme in this species is believed to be plastoquinone. Couples the redox reaction to proton translocation, and thus conserves the redox energy in a proton gradient. The chain is NAD(P)H-quinone oxidoreductase subunit 1, chloroplastic from Lactuca sativa (Garden lettuce).